We begin with the raw amino-acid sequence, 425 residues long: Alpha/beta hydrolase xenA (425 aa).

Residue aspartate 366 is part of the active site.

This sequence belongs to the AB hydrolase superfamily. FUS2 hydrolase family. As to quaternary structure, homodimer.

Its pathway is mycotoxin biosynthesis. Alpha/beta hydrolase; part of the gene cluster that mediates the biosynthesis of xenoacremones such as xenoacremone A, a compound that shows inhibitory activity toward the PI3K/AKT signaling pathway and which has the ability to induce apoptosis of A549 lung cancer cells. Within the pathway, cooperation of the hybrid PKS-NRPS xenE and the trans-acting enoyl reductase xenG is responsible for the formation of the reduced tyrosine-nonaketide derivative. The alpha/beta hydrolase xenA then accelerates intramolecular nucleophilic attack to give a pyrrolidone derivative. Subsequently, three enzymes, xenF, xenD, and xenC, coordinately participate in the conversion to xenoacremone B. XenF catalyzes sigmatropic rearrangement to form an A-ring, which leads to an unusual intermediate with a hexane ring, which is required for the formation of the tricarbocyclic product. Epoxidation catalyzed by xenD and the formation of the paracyclophane ether catalyzed by xenC initiate a spontaneous intramolecular Diels-Alder (IMDA) reaction to yield xenoacremone B. Spontaneous hydration of xenoacremone B leads to the formation of xenoacremone A, which undergoes subsequent methylation to afford xenoacremone C. The protein is Alpha/beta hydrolase xenA of Xenoacremonium sinensis (Endophyte fungus).